A 356-amino-acid polypeptide reads, in one-letter code: tRNA N6-adenosine threonylcarbamoyltransferase (356 aa).

2 residues coordinate Fe cation: histidine 115 and histidine 119. Substrate is bound by residues 138–142 (LVSGG), aspartate 171, glycine 184, and asparagine 283. Aspartate 311 lines the Fe cation pocket.

It belongs to the KAE1 / TsaD family. Requires Fe(2+) as cofactor.

It localises to the cytoplasm. The enzyme catalyses L-threonylcarbamoyladenylate + adenosine(37) in tRNA = N(6)-L-threonylcarbamoyladenosine(37) in tRNA + AMP + H(+). In terms of biological role, required for the formation of a threonylcarbamoyl group on adenosine at position 37 (t(6)A37) in tRNAs that read codons beginning with adenine. Is involved in the transfer of the threonylcarbamoyl moiety of threonylcarbamoyl-AMP (TC-AMP) to the N6 group of A37, together with TsaE and TsaB. TsaD likely plays a direct catalytic role in this reaction. This is tRNA N6-adenosine threonylcarbamoyltransferase from Prochlorococcus marinus (strain MIT 9312).